The following is a 217-amino-acid chain: MNLIFLGPPGAGKGTQAKRVSEKYGIPQISTGDMLREAVAKGTELGKKAKEYMDKGELVPDEVVIGIVKERLQQPDCEKGFILDGFPRTLAQAEALDEMLKELNKKIDAVINVVVPEEEVVKRITYRRTCRNCGAVYHLIYAPPKEDNKCDKCGGELYQRDDDKEETVRERYRVYKQNTEPLIDYYRKKGILYDVDGTKDIEGVWKEIEAILEKIKS.

An ATP-binding site is contributed by 10 to 15 (GAGKGT). Positions 30–59 (STGDMLREAVAKGTELGKKAKEYMDKGELV) are NMP. Residues threonine 31, arginine 36, 57–59 (ELV), 85–88 (GFPR), and glutamine 92 each bind AMP. The tract at residues 126–163 (YRRTCRNCGAVYHLIYAPPKEDNKCDKCGGELYQRDDD) is LID. Arginine 127 contributes to the ATP binding site. Residues cysteine 130 and cysteine 133 each coordinate Zn(2+). An ATP-binding site is contributed by 136–137 (VY). Positions 150 and 153 each coordinate Zn(2+). The AMP site is built by arginine 160 and arginine 171. Lysine 199 contributes to the ATP binding site.

Belongs to the adenylate kinase family. Monomer.

It localises to the cytoplasm. The enzyme catalyses AMP + ATP = 2 ADP. Its pathway is purine metabolism; AMP biosynthesis via salvage pathway; AMP from ADP: step 1/1. Its function is as follows. Catalyzes the reversible transfer of the terminal phosphate group between ATP and AMP. Plays an important role in cellular energy homeostasis and in adenine nucleotide metabolism. The protein is Adenylate kinase of Archaeoglobus fulgidus (strain ATCC 49558 / DSM 4304 / JCM 9628 / NBRC 100126 / VC-16).